The chain runs to 3564 residues: CUB and sushi domain-containing protein 1 (3564 aa).

A signal peptide spans 1 to 29 (MTAWRKFKSLLLPLVLAVLCAGLLTAAKG). The Extracellular portion of the chain corresponds to 30-3487 (QNCGGLVQGP…NHYQGTSSGS (3458 aa)). Disulfide bonds link Cys-32-Cys-58, Cys-145-Cys-185, Cys-171-Cys-202, Cys-208-Cys-234, Cys-349-Cys-389, Cys-375-Cys-406, Cys-411-Cys-437, Cys-527-Cys-567, Cys-553-Cys-580, and Cys-584-Cys-610. Residues 32 to 140 (CGGLVQGPNG…QGFKAMYEVL (109 aa)) enclose the CUB 1 domain. Residues Asn-40 and Asn-57 are each glycosylated (N-linked (GlcNAc...) asparagine). The Sushi 1 domain occupies 143–204 (HTCGNPGEIL…WDFPAPFCRA (62 aa)). Positions 208-312 (CGGTLRGTSG…KGFNAQFQVK (105 aa)) constitute a CUB 2 domain. The Sushi 2 domain maps to 347 to 408 (DMCPDPGIPD…WNDHRPICRA (62 aa)). The CUB 3 domain maps to 411 to 522 (CGSNLRGPSG…PGFKAVYQEI (112 aa)). A Sushi 3 domain is found at 525–582 (GGCGDPGIPAYGKRTGSSFLHGDTLTFECQAAFELVGERVITCQKNNQWSGNKPSCVF). Positions 584-692 (CFFNFTAPSG…RGFNITYTTF (109 aa)) constitute a CUB 4 domain. 2 N-linked (GlcNAc...) asparagine glycosylation sites follow: Asn-587 and Asn-686. A Sushi 4 domain is found at 695–756 (NECHDPGIPV…WSSTVPRCEA (62 aa)). 6 cysteine pairs are disulfide-bonded: Cys-697–Cys-738, Cys-723–Cys-754, Cys-758–Cys-784, Cys-873–Cys-913, Cys-899–Cys-926, and Cys-930–Cys-956. In terms of domain architecture, CUB 5 spans 758–866 (CGGHLTASSG…VGFLIHYESV (109 aa)). The Sushi 5 domain occupies 871 to 928 (DSCLDPGIPVNGQRHGSNFGIRSTVTFSCDPGYTLSDDEPLVCEKNHQWNHALPSCDA). Residues 930 to 1040 (CGGYIHGKSG…EGFNITFAEY (111 aa)) enclose the CUB 6 domain. 3 N-linked (GlcNAc...) asparagine glycosylation sites follow: Asn-955, Asn-1015, and Asn-1034. Residues 1043–1102 (EPCDDPGVPAFSRRIGFQFGVGDTLAFTCFQGYRLEGATKLTCLGGGRRVWSAPLPRCVA) enclose the Sushi 6 domain. 3 disulfides stabilise this stretch: Cys-1045-Cys-1085, Cys-1071-Cys-1100, and Cys-1104-Cys-1130. The region spanning 1104–1212 (CGASVKGNEG…QGFQLTYTSF (109 aa)) is the CUB 7 domain. Asn-1184 and Asn-1197 each carry an N-linked (GlcNAc...) asparagine glycan. Positions 1215-1275 (VKCEDPGIPN…WDKPMPSCVA (61 aa)) constitute a Sushi 7 domain. 12 disulfides stabilise this stretch: Cys-1217/Cys-1258, Cys-1244/Cys-1273, Cys-1277/Cys-1304, Cys-1391/Cys-1431, Cys-1417/Cys-1447, Cys-1451/Cys-1477, Cys-1564/Cys-1604, Cys-1590/Cys-1621, Cys-1625/Cys-1651, Cys-1741/Cys-1781, Cys-1767/Cys-1798, and Cys-1802/Cys-1828. The 110-residue stretch at 1277–1386 (CGGLVHAATS…SGFSIQFSTS (110 aa)) folds into the CUB 8 domain. The region spanning 1389 to 1449 (STCNDPGMPQ…WQPDPPSCIA (61 aa)) is the Sushi 8 domain. N-linked (GlcNAc...) asparagine glycosylation is present at Asn-1399. In terms of domain architecture, CUB 9 spans 1451 to 1559 (CGGNLTGPAG…SGFAIEFKEK (109 aa)). 2 N-linked (GlcNAc...) asparagine glycosylation sites follow: Asn-1454 and Asn-1572. The Sushi 9 domain maps to 1562 to 1623 (EACFDPGNIM…WDRALPACQA (62 aa)). Residues 1625 to 1733 (CGGQYTGSEG…RGFHFVYQAV (109 aa)) form the CUB 10 domain. Asn-1644 carries N-linked (GlcNAc...) asparagine glycosylation. Residues 1739–1800 (TQCSSVPEPR…WNDTIPSCVV (62 aa)) enclose the Sushi 10 domain. Asn-1792, Asn-1805, and Asn-1882 each carry an N-linked (GlcNAc...) asparagine glycan. The 109-residue stretch at 1802-1910 (CSGNFTQRRG…AGFHLEYKTV (109 aa)) folds into the CUB 11 domain. The 60-residue stretch at 1913-1972 (AACQEPALPSNGIKIGDRYMVNDVLSFQCEPGYTLQGRSHISCMPGTVRRWNYPSPLCIA) folds into the Sushi 11 domain. 3 disulfides stabilise this stretch: Cys-1915–Cys-1955, Cys-1941–Cys-1970, and Cys-1974–Cys-2000. The CUB 12 domain occupies 1974–2082 (CGGTLTSMSG…QGFKLSYQAY (109 aa)). Asn-2018 is a glycosylation site (N-linked (GlcNAc...) asparagine). The region spanning 2085–2144 (QNCPDPPAFQNGFMINSDYSVGQSISFECYPGYILLGHPVLTCQHGTDRNWNYPFPRCDA) is the Sushi 12 domain. Cystine bridges form between Cys-2087–Cys-2127, Cys-2113–Cys-2142, and Cys-2146–Cys-2172. One can recognise a CUB 13 domain in the interval 2146–2257 (CGYNVTSQNG…LNFHAFQLKR (112 aa)). N-linked (GlcNAc...) asparagine glycosylation is found at Asn-2149, Asn-2154, and Asn-2187. The Sushi 13 domain occupies 2256–2317 (KRCPPPPAVP…FQGSPPTCEA (62 aa)). 3 cysteine pairs are disulfide-bonded: Cys-2258-Cys-2300, Cys-2286-Cys-2315, and Cys-2319-Cys-2347. Residues 2319–2430 (CPANEVRTES…KGFKIRYAAP (112 aa)) enclose the CUB 14 domain. N-linked (GlcNAc...) asparagine glycans are attached at residues Asn-2358, Asn-2394, Asn-2400, Asn-2445, Asn-2470, and Asn-2503. 15 Sushi domains span residues 2430 to 2492 (PYCS…LCQA), 2493 to 2554 (VSCG…TCKP), 2555 to 2619 (VPCP…RCKV), 2620 to 2677 (ISCG…RCLA), 2678 to 2735 (GHCG…VCVP), 2736 to 2793 (ITCG…ICRV), 2794 to 2856 (VNCS…KCLA), 2857 to 2914 (ISCG…HCSG), 2918 to 2975 (GFCG…VCEA), 2976 to 3034 (VSCG…DCTI), 3035 to 3094 (ISCG…LCKA), 3095 to 3152 (VLCN…QCLP), 3153 to 3210 (VFCG…TCID), 3214 to 3272 (TACP…ECIP), and 3273 to 3332 (HACR…VCKS). 12 disulfide bridges follow: Cys-2432/Cys-2473, Cys-2459/Cys-2490, Cys-2495/Cys-2537, Cys-2521/Cys-2552, Cys-2557/Cys-2602, Cys-2588/Cys-2617, Cys-2622/Cys-2662, Cys-2648/Cys-2675, Cys-2680/Cys-2720, Cys-2706/Cys-2733, Cys-2738/Cys-2778, and Cys-2764/Cys-2791. Asn-2605 carries N-linked (GlcNAc...) asparagine glycosylation. 2 N-linked (GlcNAc...) asparagine glycosylation sites follow: Asn-2750 and Asn-2761. Asn-2795 carries N-linked (GlcNAc...) asparagine glycosylation. Cystine bridges form between Cys-2796–Cys-2841, Cys-2827–Cys-2854, Cys-2859–Cys-2899, Cys-2885–Cys-2912, Cys-2920–Cys-2960, Cys-2946–Cys-2973, Cys-2978–Cys-3019, Cys-3005–Cys-3032, Cys-3037–Cys-3079, Cys-3063–Cys-3092, Cys-3097–Cys-3137, Cys-3123–Cys-3150, Cys-3155–Cys-3195, Cys-3181–Cys-3208, Cys-3216–Cys-3257, Cys-3243–Cys-3270, Cys-3275–Cys-3317, and Cys-3302–Cys-3330. A glycan (N-linked (GlcNAc...) asparagine) is linked at Asn-2894. N-linked (GlcNAc...) asparagine glycosylation is present at Asn-2963. N-linked (GlcNAc...) asparagine glycans are attached at residues Asn-3022, Asn-3056, and Asn-3086. Asn-3228 and Asn-3260 each carry an N-linked (GlcNAc...) asparagine glycan. Residues Asn-3339, Asn-3379, and Asn-3386 are each glycosylated (N-linked (GlcNAc...) asparagine). The chain crosses the membrane as a helical span at residues 3488-3508 (VAAAILVPFFALILSGFAFYL). Topologically, residues 3509–3564 (YKHRTRPKVQYNGYAGHENSNGQASFENPMYDTNLKPTEAKAVRFDTTLNTVCTVV) are cytoplasmic.

Belongs to the CSMD family.

Its subcellular location is the membrane. This chain is CUB and sushi domain-containing protein 1 (Csmd1), found in Mus musculus (Mouse).